Here is a 165-residue protein sequence, read N- to C-terminus: Protein NKG7 (165 aa).

The next 4 helical transmembrane spans lie at 9 to 29, 61 to 81, 92 to 112, and 133 to 153; these read LFAGSLGLTSSLIALTTDFWI, FCILAVLWGLVSVSFLILSCI, LVSTVMAFSAALSILVAMAVY, and FYLGWVSFILFLFAGCLSLGA.

Belongs to the PMP-22/EMP/MP20 family. Predominantly expressed by leukocytes with cytotoxic activity such as CD8(+) T-cells and natural killer cells.

It is found in the cell membrane. The protein resides in the cytolytic granule membrane. Functionally, regulates cytotoxic granule exocytosis in effector lymphocytes, thus acting as a critical mediator of inflammation in a broad range of infectious and non-infectious diseases. Essential for cytotoxic degranulation of natural killer (NK) cells and CD8(+) T-cells and for the activation of CD4(+) T-cells following infection. Plays a critical role in CD8(+) T-cell and NK cell-mediated cytolysis of target cells and contributes to the cytolytic activity via the perforin/granzyme pathway by enhancing exocytosis of LAMP1-carrying lytic granules. Contributes to NK cell-mediated control of cancer metastasis. The chain is Protein NKG7 (Nkg7) from Mus musculus (Mouse).